Reading from the N-terminus, the 84-residue chain is Large ribosomal subunit protein uL23 (84 aa).

This sequence belongs to the universal ribosomal protein uL23 family. Part of the 50S ribosomal subunit. Contacts protein L29.

In terms of biological role, binds to 23S rRNA. One of the proteins that surrounds the polypeptide exit tunnel on the outside of the ribosome. The chain is Large ribosomal subunit protein uL23 from Haloquadratum walsbyi (strain DSM 16790 / HBSQ001).